Reading from the N-terminus, the 1159-residue chain is WASH complex subunit 5 (1159 aa).

It belongs to the strumpellin family. In terms of assembly, component of the WASH complex.

The protein resides in the early endosome. Its function is as follows. Acts at least in part as component of the WASH complex which seems to regulate washc1 nucleation-promoting factor (NPF) activity and is required for its membrane targeting during endosomal sorting. The protein is WASH complex subunit 5 of Danio rerio (Zebrafish).